The following is a 224-amino-acid chain: Orotate phosphoribosyltransferase (224 aa).

5-phospho-alpha-D-ribose 1-diphosphate is bound by residues Lys-26, 73–74 (YK), Arg-100, Lys-101, Lys-104, His-106, and 127–135 (EDVTTSGKS). Thr-131 and Arg-160 together coordinate orotate.

Belongs to the purine/pyrimidine phosphoribosyltransferase family. PyrE subfamily. In terms of assembly, homodimer. Mg(2+) is required as a cofactor.

It catalyses the reaction orotidine 5'-phosphate + diphosphate = orotate + 5-phospho-alpha-D-ribose 1-diphosphate. Its pathway is pyrimidine metabolism; UMP biosynthesis via de novo pathway; UMP from orotate: step 1/2. Functionally, catalyzes the transfer of a ribosyl phosphate group from 5-phosphoribose 1-diphosphate to orotate, leading to the formation of orotidine monophosphate (OMP). The chain is Orotate phosphoribosyltransferase from Clostridium botulinum (strain Eklund 17B / Type B).